The following is a 128-amino-acid chain: NADH-quinone oxidoreductase subunit A (128 aa).

Helical transmembrane passes span 9–29 (FPIA…LALA), 68–88 (LLFI…VLLL), and 96–116 (LGWA…AGLV).

This sequence belongs to the complex I subunit 3 family. As to quaternary structure, NDH-1 is composed of 14 different subunits. Subunits NuoA, H, J, K, L, M, N constitute the membrane sector of the complex.

The protein localises to the cell inner membrane. The enzyme catalyses a quinone + NADH + 5 H(+)(in) = a quinol + NAD(+) + 4 H(+)(out). NDH-1 shuttles electrons from NADH, via FMN and iron-sulfur (Fe-S) centers, to quinones in the respiratory chain. The immediate electron acceptor for the enzyme in this species is believed to be ubiquinone. Couples the redox reaction to proton translocation (for every two electrons transferred, four hydrogen ions are translocated across the cytoplasmic membrane), and thus conserves the redox energy in a proton gradient. The polypeptide is NADH-quinone oxidoreductase subunit A (Anaeromyxobacter sp. (strain Fw109-5)).